Here is a 1105-residue protein sequence, read N- to C-terminus: Ran-binding protein 6 (1105 aa).

N-acetylalanine is present on alanine 2. 4 HEAT repeats span residues 219-257 (FKDF…TVPK), 361-399 (KVVL…GCHQ), 402-440 (ESIL…DFAP), and 444-483 (KKFH…DCPK). A ran-GTP binding region spans residues 333-383 (DEMEEDDFDSNAVAAESALDRLACGLGGKVVLPMTKEHIMQMLQSPDWKYR). Positions 806-842 (KAKLEGHFKNQELRQVKRQEENYDQQVEMSLQDEDEC) form a coiled coil. HEAT repeat units lie at residues 866 to 905 (LPWF…HCSP), 908 to 946 (FKYV…FGGD), and 949 to 987 (RSLC…IGKI).

It belongs to the importin beta family.

The protein localises to the cytoplasm. It localises to the nucleus. Its function is as follows. May function in nuclear protein import as nuclear transport receptor. This is Ran-binding protein 6 (RANBP6) from Homo sapiens (Human).